We begin with the raw amino-acid sequence, 269 residues long: Membrane protein insertase YidC 1 (269 aa).

An N-terminal signal peptide occupies residues 1-20; that stretch reads MKKKFSLIAMAGAALLLLTA. C21 is lipidated: N-palmitoyl cysteine. C21 carries the S-diacylglycerol cysteine lipid modification. 4 helical membrane passes run 45–65, 124–144, 165–185, and 203–223; these read IRFL…TIVI, YMGC…YQAL, PTFI…YLMM, and PIFI…YWVI.

Belongs to the OXA1/ALB3/YidC family. Type 2 subfamily.

The protein resides in the cell membrane. Functionally, required for the insertion and/or proper folding and/or complex formation of integral membrane proteins into the membrane. Involved in integration of membrane proteins that insert both dependently and independently of the Sec translocase complex, as well as at least some lipoproteins. This is Membrane protein insertase YidC 1 from Lactococcus lactis subsp. lactis (strain IL1403) (Streptococcus lactis).